The sequence spans 545 residues: Thermosome subunit (545 aa).

This sequence belongs to the TCP-1 chaperonin family. Forms an oligomeric complex of eight-membered rings.

In terms of biological role, molecular chaperone; binds unfolded polypeptides in vitro, and has a weak ATPase activity. In Desulfurococcus sp. (strain SY), this protein is Thermosome subunit (ths).